The sequence spans 674 residues: Dystrophia myotonica WD repeat-containing protein (674 aa).

Alanine 2 carries the post-translational modification N-acetylalanine. Disordered regions lie at residues 31–92 (GFYK…PALP) and 103–122 (EPDS…LGSG). Over residues 53 to 65 (PVPPQPPQPPPGP) the composition is skewed to pro residues. Low complexity predominate over residues 66–77 (ASASGPGAAGPA). Residues 78-90 (SSPPPAGPGPGPA) show a composition bias toward pro residues. A compositionally biased stretch (low complexity) spans 107–118 (AGAGEPPATPAG). 5 WD repeats span residues 211–251 (IDKT…ASAP), 282–321 (VGEG…LRGL), 324–363 (SYFG…VVAR), 366–409 (GHKS…EAAG), and 413–453 (AGGA…LYPH). 4 disordered regions span residues 384–419 (EEAA…APLS), 456–516 (LART…EPGT), 532–573 (RDRG…RSRL), and 637–674 (DEET…GTVV). Low complexity-rich tracts occupy residues 457–478 (ARTR…SSRG) and 487–499 (PRSL…LPHP). At serine 495 the chain carries Phosphoserine. Composition is skewed to gly residues over residues 500–509 (AGGGKAGGPG) and 550–563 (SRGG…GGEK). The residue at position 551 (arginine 551) is an Omega-N-methylarginine. The stretch at 601 to 638 (IAQERLTVLLFLEDCIITACQEGLICTWARPGKAFTDE) is one WD 6 repeat. Positions 642–674 (AQTGEGSWPRSPSKSVVEGISSQPGNSPSGTVV) are enriched in polar residues.

In terms of assembly, component of the USP12/DMWD/WDR48 deubiquitinating complex. Interacts with USP12; promotes its enzymatic activity. Interacts with USP46.

It is found in the cytoplasm. Its subcellular location is the nucleus. The protein resides in the perikaryon. It localises to the cell projection. The protein localises to the dendrite. Its function is as follows. Regulator of the deubiquitinating USP12/DMWD/WDR48 complex. Functions as a cofactor that promotes USP12 enzymatic activity. In Homo sapiens (Human), this protein is Dystrophia myotonica WD repeat-containing protein.